A 437-amino-acid chain; its full sequence is NADH-ubiquinone oxidoreductase chain 4 (437 aa).

13 helical membrane passes run 8–28, 50–70, 78–98, 100–120, 132–152, 177–197, 212–232, 239–259, 266–286, 297–317, 324–344, 361–381, and 417–437; these read GASICLFPFWEVTMLTLAFII, LTPIGTALIFLTLMVTLLVLI, YKYIGCLSSLNLVLMMAFCVC, FLTFYVMFEVSLIPTLLLILL, FYLMLYTVTASLPLLLLLLYL, LVGLMMAFLVKLPIYTCHLWL, LAGVLLKLGGYGLYMLINFII, VISVIITLSLWGAVIASIICI, ALVAYSSVAHMSLVSAGILMM, TMIAHGYTSSALFVLANLSYL, LMFMKGLLAIFPAMAFYWFLF, LLIIPSMYIASYMLLILMCII, and HVLTAHLLPTFILLIPQLFSV.

Belongs to the complex I subunit 4 family.

The protein resides in the mitochondrion membrane. The catalysed reaction is a ubiquinone + NADH + 5 H(+)(in) = a ubiquinol + NAD(+) + 4 H(+)(out). Functionally, core subunit of the mitochondrial membrane respiratory chain NADH dehydrogenase (Complex I) that is believed to belong to the minimal assembly required for catalysis. Complex I functions in the transfer of electrons from NADH to the respiratory chain. The immediate electron acceptor for the enzyme is believed to be ubiquinone. The protein is NADH-ubiquinone oxidoreductase chain 4 (ND4) of Albinaria caerulea (Land snail).